The primary structure comprises 150 residues: MKVVFLEDVKGRGKKGEIKEVPDGYANNFLIKNKKAEPATGKNLGAVKGRQKAEEKAAAEELAEARKLADFFANEKTVVELTGKSGTDGRLFGAVSTKQIAAALEKQYQIKIDKRKMELNQPIHALGYTDVPVKLHREVTAQLRVHVSEG.

It belongs to the bacterial ribosomal protein bL9 family.

Functionally, binds to the 23S rRNA. In Leuconostoc mesenteroides subsp. mesenteroides (strain ATCC 8293 / DSM 20343 / BCRC 11652 / CCM 1803 / JCM 6124 / NCDO 523 / NBRC 100496 / NCIMB 8023 / NCTC 12954 / NRRL B-1118 / 37Y), this protein is Large ribosomal subunit protein bL9.